We begin with the raw amino-acid sequence, 494 residues long: Sulfate adenylyltransferase subunit 1 (494 aa).

The 217-residue stretch at 24–240 (TRPLRLITCG…LELATVRSAQ (217 aa)) folds into the tr-type G domain. A G1 region spans residues 33–40 (GSVDDGKS). 33–40 (GSVDDGKS) lines the GTP pocket. Positions 91–95 (GITID) are G2. A G3 region spans residues 112–115 (DTPG). Residues 112–116 (DTPGH) and 167–170 (NKID) each bind GTP. Positions 167-170 (NKID) are G4. The G5 stretch occupies residues 204 to 206 (SAL).

It belongs to the TRAFAC class translation factor GTPase superfamily. Classic translation factor GTPase family. CysN/NodQ subfamily. As to quaternary structure, heterodimer composed of CysD, the smaller subunit, and CysN.

The enzyme catalyses sulfate + ATP + H(+) = adenosine 5'-phosphosulfate + diphosphate. Its pathway is sulfur metabolism; hydrogen sulfide biosynthesis; sulfite from sulfate: step 1/3. Its function is as follows. With CysD forms the ATP sulfurylase (ATPS) that catalyzes the adenylation of sulfate producing adenosine 5'-phosphosulfate (APS) and diphosphate, the first enzymatic step in sulfur assimilation pathway. APS synthesis involves the formation of a high-energy phosphoric-sulfuric acid anhydride bond driven by GTP hydrolysis by CysN coupled to ATP hydrolysis by CysD. The protein is Sulfate adenylyltransferase subunit 1 of Rhizobium rhizogenes (strain K84 / ATCC BAA-868) (Agrobacterium radiobacter).